Reading from the N-terminus, the 153-residue chain is HTH-type transcriptional regulator Zrp (153 aa).

The region spanning 2 to 63 is the HTH asnC-type domain; sequence IDYRDRHILS…LLDRKKINLP (62 aa). Positions 21–40 form a DNA-binding region, H-T-H motif; sequence LAEIAERVALSVSACSRRVA.

The protein is HTH-type transcriptional regulator Zrp (zrp) of Zymomonas mobilis subsp. mobilis (strain ATCC 10988 / DSM 424 / LMG 404 / NCIMB 8938 / NRRL B-806 / ZM1).